The chain runs to 276 residues: Diaminopimelate epimerase (276 aa).

Residues N13, Q46, and N66 each contribute to the substrate site. C75 functions as the Proton donor in the catalytic mechanism. Residues 76 to 77 (GN), N159, N192, and 210 to 211 (ER) contribute to the substrate site. C219 (proton acceptor) is an active-site residue. A substrate-binding site is contributed by 220-221 (GT).

It belongs to the diaminopimelate epimerase family. Homodimer.

The protein localises to the cytoplasm. The catalysed reaction is (2S,6S)-2,6-diaminopimelate = meso-2,6-diaminopimelate. The protein operates within amino-acid biosynthesis; L-lysine biosynthesis via DAP pathway; DL-2,6-diaminopimelate from LL-2,6-diaminopimelate: step 1/1. In terms of biological role, catalyzes the stereoinversion of LL-2,6-diaminopimelate (L,L-DAP) to meso-diaminopimelate (meso-DAP), a precursor of L-lysine and an essential component of the bacterial peptidoglycan. This Pseudomonas syringae pv. syringae (strain B728a) protein is Diaminopimelate epimerase.